We begin with the raw amino-acid sequence, 513 residues long: ATP synthase subunit beta (513 aa).

The tract at residues M1–A29 is disordered. Over residues K14–A29 the composition is skewed to low complexity. G186–T193 provides a ligand contact to ATP.

Belongs to the ATPase alpha/beta chains family. F-type ATPases have 2 components, CF(1) - the catalytic core - and CF(0) - the membrane proton channel. CF(1) has five subunits: alpha(3), beta(3), gamma(1), delta(1), epsilon(1). CF(0) has three main subunits: a(1), b(2) and c(9-12). The alpha and beta chains form an alternating ring which encloses part of the gamma chain. CF(1) is attached to CF(0) by a central stalk formed by the gamma and epsilon chains, while a peripheral stalk is formed by the delta and b chains.

The protein localises to the cell inner membrane. It carries out the reaction ATP + H2O + 4 H(+)(in) = ADP + phosphate + 5 H(+)(out). In terms of biological role, produces ATP from ADP in the presence of a proton gradient across the membrane. The catalytic sites are hosted primarily by the beta subunits. The polypeptide is ATP synthase subunit beta (Sphingopyxis alaskensis (strain DSM 13593 / LMG 18877 / RB2256) (Sphingomonas alaskensis)).